A 323-amino-acid chain; its full sequence is Aspartate carbamoyltransferase catalytic subunit (323 aa).

Residues R55 and T56 each coordinate carbamoyl phosphate. K83 provides a ligand contact to L-aspartate. Carbamoyl phosphate-binding residues include R105, H138, and Q141. Residues R181 and R235 each contribute to the L-aspartate site. Carbamoyl phosphate contacts are provided by G276 and P277.

It belongs to the aspartate/ornithine carbamoyltransferase superfamily. ATCase family. Heterododecamer (2C3:3R2) of six catalytic PyrB chains organized as two trimers (C3), and six regulatory PyrI chains organized as three dimers (R2).

It catalyses the reaction carbamoyl phosphate + L-aspartate = N-carbamoyl-L-aspartate + phosphate + H(+). Its pathway is pyrimidine metabolism; UMP biosynthesis via de novo pathway; (S)-dihydroorotate from bicarbonate: step 2/3. Its function is as follows. Catalyzes the condensation of carbamoyl phosphate and aspartate to form carbamoyl aspartate and inorganic phosphate, the committed step in the de novo pyrimidine nucleotide biosynthesis pathway. The sequence is that of Aspartate carbamoyltransferase catalytic subunit from Corynebacterium aurimucosum (strain ATCC 700975 / DSM 44827 / CIP 107346 / CN-1) (Corynebacterium nigricans).